A 168-amino-acid polypeptide reads, in one-letter code: Sec-independent protein translocase protein TatB (168 aa).

The chain crosses the membrane as a helical span at residues 1–21 (MIDLGISKLALIGAVALIVIG).

Belongs to the TatB family. The Tat system comprises two distinct complexes: a TatABC complex, containing multiple copies of TatA, TatB and TatC subunits, and a separate TatA complex, containing only TatA subunits. Substrates initially bind to the TatABC complex, which probably triggers association of the separate TatA complex to form the active translocon.

Its subcellular location is the cell inner membrane. Its function is as follows. Part of the twin-arginine translocation (Tat) system that transports large folded proteins containing a characteristic twin-arginine motif in their signal peptide across membranes. Together with TatC, TatB is part of a receptor directly interacting with Tat signal peptides. TatB may form an oligomeric binding site that transiently accommodates folded Tat precursor proteins before their translocation. This chain is Sec-independent protein translocase protein TatB, found in Cupriavidus pinatubonensis (strain JMP 134 / LMG 1197) (Cupriavidus necator (strain JMP 134)).